We begin with the raw amino-acid sequence, 220 residues long: Cytidylate kinase (220 aa).

ATP is bound at residue 10 to 18; it reads GPASSGKST.

The protein belongs to the cytidylate kinase family. Type 1 subfamily.

The protein resides in the cytoplasm. The enzyme catalyses CMP + ATP = CDP + ADP. The catalysed reaction is dCMP + ATP = dCDP + ADP. This Lactococcus lactis subsp. lactis (strain IL1403) (Streptococcus lactis) protein is Cytidylate kinase.